A 176-amino-acid chain; its full sequence is Protein CURLY FLAG LEAF 2 (176 aa).

Positions 41–46 (FLELSS) match the EAR motif. The WW domain maps to 48–82 (FSVPSHLEQCLDLKTGEIYYRSWNSGMRVKEDPRK). Disordered regions lie at residues 77–106 (KEDPRKSMSRGNYADQSSGESSGTVFSSEE) and 111–130 (YESEESSSESSPSSRKYHKE). A compositionally biased stretch (low complexity) spans 93–106 (SSGESSGTVFSSEE).

In terms of assembly, may interact with BHLH122/CFLAP1 and BHLH80/CFLAP2.

Its function is as follows. May negatively regulate the cuticle development by interacting with the HD-ZIP IV transcription factor HDG1. The chain is Protein CURLY FLAG LEAF 2 from Arabidopsis thaliana (Mouse-ear cress).